We begin with the raw amino-acid sequence, 189 residues long: Ion-translocating oxidoreductase complex subunit B (189 aa).

The hydrophobic stretch occupies residues 1-26; sequence MSGIFIAIILLTILALLFGILLGFAA. The 59-residue stretch at 32 to 90 folds into the 4Fe-4S domain; it reads EGDPLVDQLEALLPQTQCGQCGYPGCRPYAEAIANGEKINLCPPGGSATMEKLAEMAGV. The [4Fe-4S] cluster site is built by Cys-49, Cys-52, Cys-57, Cys-73, Cys-114, Cys-117, Cys-120, Cys-124, Cys-144, Cys-147, Cys-150, and Cys-154. 2 4Fe-4S ferredoxin-type domains span residues 105 to 134 and 135 to 164; these read KVAY…GSGK and LMHT…MLPV.

Belongs to the 4Fe4S bacterial-type ferredoxin family. RnfB subfamily. In terms of assembly, the complex is composed of six subunits: RnfA, RnfB, RnfC, RnfD, RnfE and RnfG. [4Fe-4S] cluster is required as a cofactor.

The protein resides in the cell inner membrane. In terms of biological role, part of a membrane-bound complex that couples electron transfer with translocation of ions across the membrane. The polypeptide is Ion-translocating oxidoreductase complex subunit B (Shewanella sediminis (strain HAW-EB3)).